We begin with the raw amino-acid sequence, 350 residues long: Salicylate decarboxylase (350 aa).

Belongs to the metallo-dependent hydrolases superfamily. In terms of assembly, homotetramer.

It carries out the reaction salicylate + H(+) = phenol + CO2. Inhibited by AgNO(3), HgCl(2), p-chloromercuribenzoic acid and NiCl(2). Its function is as follows. Reversibly catalyzes the regioselective carboxylation of phenol to form salicylic acid. Involved in a pathway for the degradation of salicylate via phenol. Also catalyzes the decarboxylation of beta-resorcylic acid (2,4-dihydroxybenzoic acid) into resorcinol (1,3-dihydroxybenzene), gamma-resorcylic acid (2,6-dihydroxybenzoic acid) into resorcinol, 2,3-dihydroxybenzoic acid into catechol (1,2-dihydroxybenzene), and 4-aminosalicylic acid into 3-aminophenol. The sequence is that of Salicylate decarboxylase from Cutaneotrichosporon moniliiforme (Yeast).